Here is a 283-residue protein sequence, read N- to C-terminus: Pantothenate synthetase (283 aa).

Position 30 to 37 (30 to 37) interacts with ATP; that stretch reads MGNLHDGH. Residue His-37 is the Proton donor of the active site. Gln-61 is a (R)-pantoate binding site. Gln-61 lines the beta-alanine pocket. Residue 149-152 coordinates ATP; that stretch reads GEKD. Gln-155 is a (R)-pantoate binding site. 186–189 is a binding site for ATP; sequence LSSR.

It belongs to the pantothenate synthetase family. Homodimer.

The protein resides in the cytoplasm. The enzyme catalyses (R)-pantoate + beta-alanine + ATP = (R)-pantothenate + AMP + diphosphate + H(+). It functions in the pathway cofactor biosynthesis; (R)-pantothenate biosynthesis; (R)-pantothenate from (R)-pantoate and beta-alanine: step 1/1. In terms of biological role, catalyzes the condensation of pantoate with beta-alanine in an ATP-dependent reaction via a pantoyl-adenylate intermediate. The polypeptide is Pantothenate synthetase (Shigella sonnei (strain Ss046)).